A 340-amino-acid chain; its full sequence is Glycerol-3-phosphate dehydrogenase [NAD(P)+] (340 aa).

The NADPH site is built by Ser11, Trp12, Arg33, and Lys106. Residues Lys106, Gly137, and Ser139 each coordinate sn-glycerol 3-phosphate. Residue Ala141 coordinates NADPH. Residues Lys192, Asp245, Ser255, Arg256, and Asn257 each contribute to the sn-glycerol 3-phosphate site. Residue Lys192 is the Proton acceptor of the active site. Arg256 serves as a coordination point for NADPH. Positions 280 and 282 each coordinate NADPH.

It belongs to the NAD-dependent glycerol-3-phosphate dehydrogenase family.

The protein localises to the cytoplasm. The enzyme catalyses sn-glycerol 3-phosphate + NAD(+) = dihydroxyacetone phosphate + NADH + H(+). It catalyses the reaction sn-glycerol 3-phosphate + NADP(+) = dihydroxyacetone phosphate + NADPH + H(+). It functions in the pathway membrane lipid metabolism; glycerophospholipid metabolism. In terms of biological role, catalyzes the reduction of the glycolytic intermediate dihydroxyacetone phosphate (DHAP) to sn-glycerol 3-phosphate (G3P), the key precursor for phospholipid synthesis. This chain is Glycerol-3-phosphate dehydrogenase [NAD(P)+], found in Bacillus cereus (strain G9842).